The primary structure comprises 490 residues: ATP synthase subunit beta, chloroplastic (490 aa).

ATP is bound at residue 170 to 177 (GGAGVGKT).

This sequence belongs to the ATPase alpha/beta chains family. In terms of assembly, F-type ATPases have 2 components, CF(1) - the catalytic core - and CF(0) - the membrane proton channel. CF(1) has five subunits: alpha(3), beta(3), gamma(1), delta(1), epsilon(1). CF(0) has four main subunits: a(1), b(1), b'(1) and c(9-12).

Its subcellular location is the plastid. It is found in the chloroplast thylakoid membrane. The enzyme catalyses ATP + H2O + 4 H(+)(in) = ADP + phosphate + 5 H(+)(out). Its function is as follows. Produces ATP from ADP in the presence of a proton gradient across the membrane. The catalytic sites are hosted primarily by the beta subunits. The protein is ATP synthase subunit beta, chloroplastic of Pinus koraiensis (Korean pine).